A 245-amino-acid chain; its full sequence is MIKLVLIRHGQSLWNLENRFTGWTDVDLSENGLSEAREAGAILKKNGYTFDVAYTSVLKRAIRTLWIVLHEMNLSWVPVHKSWKLNERHYGALQGLNKDETAKKYGEEQVHIWRRSIDVRPPALTEDDPRYEMNDPRYKELKKGEFPLTECLVDTEKRVLNYWHSEIAPSLKSGEKVIISSHGNTIRSLVKYLDNLSSDGVVSLNIPTSIPLVYELDDDLRPIRHYYLSMDGEVPEGEFPKHIVF.

Substrate is bound by residues 8–15 (RHGQSLWN), 21–22 (TG), Arg60, 87–90 (ERHY), Lys98, 114–115 (RR), and 183–184 (GN). His9 acts as the Tele-phosphohistidine intermediate in catalysis. Glu87 functions as the Proton donor/acceptor in the catalytic mechanism.

Belongs to the phosphoglycerate mutase family. BPG-dependent PGAM subfamily.

The enzyme catalyses (2R)-2-phosphoglycerate = (2R)-3-phosphoglycerate. The protein operates within carbohydrate degradation; glycolysis; pyruvate from D-glyceraldehyde 3-phosphate: step 3/5. Its function is as follows. Catalyzes the interconversion of 2-phosphoglycerate and 3-phosphoglycerate. The sequence is that of 2,3-bisphosphoglycerate-dependent phosphoglycerate mutase from Bacillus thuringiensis (strain Al Hakam).